The chain runs to 92 residues: Large ribosomal subunit protein bL27 (92 aa).

Residues 1 to 9 (MLVMNLQYF) constitute a propeptide that is removed on maturation.

Belongs to the bacterial ribosomal protein bL27 family. The N-terminus is cleaved by ribosomal processing cysteine protease Prp.

The chain is Large ribosomal subunit protein bL27 from Heliobacterium modesticaldum (strain ATCC 51547 / Ice1).